A 250-amino-acid polypeptide reads, in one-letter code: S-adenosyl-L-methionine-dependent 2-deoxy-scyllo-inosamine dehydrogenase (250 aa).

[4Fe-4S] cluster is bound by residues Cys-16, Cys-20, Cys-23, Cys-169, Cys-187, and Glu-223.

Belongs to the radical SAM superfamily. [4Fe-4S] cluster serves as cofactor.

It catalyses the reaction 2-deoxy-scyllo-inosamine + S-adenosyl-L-methionine = 3-amino-2,3-dideoxy-scyllo-inosose + 5'-deoxyadenosine + L-methionine + H(+). It functions in the pathway antibiotic biosynthesis; butirosin biosynthesis. Its function is as follows. Catalyzes the radical S-adenosyl-L-methionine (SAM)-dependent two-electron oxidation of 2-deoxy-scyllo-inosamine (DOIA) to amino-dideoxy-scyllo-inosose (amino-DOI) in the biosynthetic pathway of butirosin. The chain is S-adenosyl-L-methionine-dependent 2-deoxy-scyllo-inosamine dehydrogenase (btrN) from Niallia circulans (Bacillus circulans).